A 663-amino-acid polypeptide reads, in one-letter code: Translation factor GUF1, mitochondrial (663 aa).

Residues 1–44 constitute a mitochondrion transit peptide; the sequence is MRGCLQSVRWLTTALRRPAPQLSCLPFQPFASTSRLFSSCASRA. The region spanning 65-245 is the tr-type G domain; that stretch reads ERFRNFCIVA…TIVEQIPAPV (181 aa). GTP is bound by residues 74–81, 138–142, and 192–195; these read AHVDHGKS, DTPGH, and NKVD.

Belongs to the TRAFAC class translation factor GTPase superfamily. Classic translation factor GTPase family. LepA subfamily.

It localises to the mitochondrion inner membrane. The catalysed reaction is GTP + H2O = GDP + phosphate + H(+). In terms of biological role, promotes mitochondrial protein synthesis. May act as a fidelity factor of the translation reaction, by catalyzing a one-codon backward translocation of tRNAs on improperly translocated ribosomes. Binds to mitochondrial ribosomes in a GTP-dependent manner. The chain is Translation factor GUF1, mitochondrial from Coccidioides posadasii (strain C735) (Valley fever fungus).